A 317-amino-acid polypeptide reads, in one-letter code: Olfactory receptor 2F1 (317 aa).

Over M1–R24 the chain is Extracellular. The N-linked (GlcNAc...) asparagine glycan is linked to N5. A helical transmembrane segment spans residues V25–L48. Residues I49 to T57 lie on the Cytoplasmic side of the membrane. Residues P58 to P79 form a helical membrane-spanning segment. Residues Q80–Q100 are Extracellular-facing. A disulfide bond links C97 and C189. Residues L101 to Y120 traverse the membrane as a helical segment. At D121 to G139 the chain is on the cytoplasmic side. Residues L140 to T160 traverse the membrane as a helical segment. Over A161 to M200 the chain is Extracellular. Residues V201–I222 traverse the membrane as a helical segment. Residues S223–K236 are Cytoplasmic-facing. The chain crosses the membrane as a helical span at residues A237 to Q261. Residues P262–K272 are Extracellular-facing. Residues L273 to L292 traverse the membrane as a helical segment. Residues R293–T317 lie on the Cytoplasmic side of the membrane.

Belongs to the G-protein coupled receptor 1 family.

It localises to the cell membrane. Odorant receptor. In Homo sapiens (Human), this protein is Olfactory receptor 2F1 (OR2F1).